The primary structure comprises 364 residues: tRNA 2-selenouridine synthase (364 aa).

Residues 14-137 (LIADTPIIDV…LRQTTIQATI (124 aa)) form the Rhodanese domain. Cysteine 97 functions as the S-selanylcysteine intermediate in the catalytic mechanism.

Belongs to the SelU family. Monomer.

It catalyses the reaction 5-methylaminomethyl-2-thiouridine(34) in tRNA + selenophosphate + (2E)-geranyl diphosphate + H2O + H(+) = 5-methylaminomethyl-2-selenouridine(34) in tRNA + (2E)-thiogeraniol + phosphate + diphosphate. The enzyme catalyses 5-methylaminomethyl-2-thiouridine(34) in tRNA + (2E)-geranyl diphosphate = 5-methylaminomethyl-S-(2E)-geranyl-thiouridine(34) in tRNA + diphosphate. It carries out the reaction 5-methylaminomethyl-S-(2E)-geranyl-thiouridine(34) in tRNA + selenophosphate + H(+) = 5-methylaminomethyl-2-(Se-phospho)selenouridine(34) in tRNA + (2E)-thiogeraniol. The catalysed reaction is 5-methylaminomethyl-2-(Se-phospho)selenouridine(34) in tRNA + H2O = 5-methylaminomethyl-2-selenouridine(34) in tRNA + phosphate. Involved in the post-transcriptional modification of the uridine at the wobble position (U34) of tRNA(Lys), tRNA(Glu) and tRNA(Gln). Catalyzes the conversion of 2-thiouridine (S2U-RNA) to 2-selenouridine (Se2U-RNA). Acts in a two-step process involving geranylation of 2-thiouridine (S2U) to S-geranyl-2-thiouridine (geS2U) and subsequent selenation of the latter derivative to 2-selenouridine (Se2U) in the tRNA chain. The chain is tRNA 2-selenouridine synthase from Escherichia coli O8 (strain IAI1).